An 83-amino-acid polypeptide reads, in one-letter code: Mu-conotoxin-like PnMKLT1-014 (83 aa).

A signal peptide spans 1–22 (MNLTCMMIVAVLFLTAWTFVMA). The propeptide occupies 23–50 (DDSNNGLANLFSKSRYEMEDPEPSKLEK). 3 disulfide bridges follow: cysteine 54–cysteine 72, cysteine 61–cysteine 77, and cysteine 71–cysteine 82.

This sequence belongs to the conotoxin O1 superfamily. In terms of tissue distribution, expressed by the venom duct.

Its subcellular location is the secreted. In terms of biological role, mu-conotoxins block voltage-gated sodium channels (Nav). This is Mu-conotoxin-like PnMKLT1-014 from Conus pennaceus (Feathered cone).